A 365-amino-acid polypeptide reads, in one-letter code: Prostaglandin E2 receptor EP3 subtype (365 aa).

Topologically, residues 1–30 (MAGVWAPEHSVEAHSNQSSAADGCGSVSVA) are extracellular. A glycan (N-linked (GlcNAc...) asparagine) is linked at N16. A helical transmembrane segment spans residues 31–55 (FPITMMVTGFVGNALAMLLVVRSYR). The Cytoplasmic segment spans residues 56 to 68 (RRESKRKKSFLLC). The helical transmembrane segment at 69–89 (IGWLALTDLVGQLLTSPVVIL) threads the bilayer. Residues 90–108 (VYLSQRRWEQLDPSGRLCT) are Extracellular-facing. A disulfide bridge links C107 with C184. A helical membrane pass occupies residues 109 to 130 (FFGLTMTVFGLSSLLVASAMAV). The Cytoplasmic segment spans residues 131-151 (ERALAIRAPHWYASHMKTRAT). The chain crosses the membrane as a helical span at residues 152-173 (PVLLGVWLSVLAFALLPVLGVG). Topologically, residues 174–203 (RYSVQWPGTWCFISTGPAGNETDSAREPGS) are extracellular. Residue N193 is glycosylated (N-linked (GlcNAc...) asparagine). A helical transmembrane segment spans residues 204 to 229 (VAFASAFACLGLLALVVTFACNLATI). Over 230–259 (KALVSRCRAKAAASQSSAQWGRITTETAIQ) the chain is Cytoplasmic. A helical transmembrane segment spans residues 260 to 283 (LMGIMCVLSVCWSPLLIMMLKMIF). Over 284 to 303 (NQMSVEQCKTQMGKEKECNS) the chain is Extracellular. A helical membrane pass occupies residues 304 to 325 (FLIAVRLASLNQILDPWVYLLL). Residues 326–365 (RKILLRKFCQIRDHTNYASSSTSLPCPGSSVLMWSDQLER) are Cytoplasmic-facing.

The protein belongs to the G-protein coupled receptor 1 family. In terms of assembly, interacts (via C-terminus) with MKLN1. Does not interact with MKLN1. Principally expressed in the tubules of the renal medulla. Specific expression is seen in medullary and cortical thick ascending limbs; lower levels are detected in cortical and inner medullary collecting ducts. Not detected significantly in the glomeruli. In the brain, expressed in all types of glial cells.

It localises to the cell membrane. In terms of biological role, receptor for prostaglandin E2 (PGE2). Required for normal development of fever in response to pyrinogens, including IL1B, prostaglandin E2 and bacterial lipopolysaccharide (LPS). Required for normal potentiation of platelet aggregation by prostaglandin E2, and thus plays a role in the regulation of blood coagulation. Required for increased HCO3(-) secretion in the duodenum in response to mucosal acidification, and thereby contributes to the protection of the mucosa against acid-induced ulceration. Not required for normal kidney function, normal urine volume and osmolality. Its function is as follows. Receptor for prostaglandin E2 (PGE2); ligand binding activates a signaling cascade via G(i) proteins that leads to the inhibition of adenylate cyclase. Functionally, receptor for prostaglandin E2 (PGE2); ligand binding can activate several distinct signaling cascades, resulting in activation or inhibition of adenylate cyclase. This chain is Prostaglandin E2 receptor EP3 subtype (Ptger3), found in Rattus norvegicus (Rat).